The following is a 247-amino-acid chain: tRNA pseudouridine synthase A (247 aa).

Asp52 functions as the Nucleophile in the catalytic mechanism. Substrate is bound at residue Tyr113.

The protein belongs to the tRNA pseudouridine synthase TruA family. Homodimer.

It carries out the reaction uridine(38/39/40) in tRNA = pseudouridine(38/39/40) in tRNA. In terms of biological role, formation of pseudouridine at positions 38, 39 and 40 in the anticodon stem and loop of transfer RNAs. This chain is tRNA pseudouridine synthase A, found in Sinorhizobium fredii (strain NBRC 101917 / NGR234).